We begin with the raw amino-acid sequence, 529 residues long: hal-like protein DDB_G0273787/DDB_G0273081 (529 aa).

The 5-imidazolinone (Ala-Gly) cross-link spans 151–153 (ASG). Position 152 is a 2,3-didehydroalanine (Ser) (S152).

The protein belongs to the PAL/histidase family. Post-translationally, contains an active site 4-methylidene-imidazol-5-one (MIO), which is formed autocatalytically by cyclization and dehydration of residues Ala-Ser-Gly.

The protein resides in the cytoplasm. It catalyses the reaction L-histidine = trans-urocanate + NH4(+). Its pathway is amino-acid degradation; L-histidine degradation into L-glutamate; N-formimidoyl-L-glutamate from L-histidine: step 1/3. The sequence is that of hal-like protein DDB_G0273787/DDB_G0273081 from Dictyostelium discoideum (Social amoeba).